Reading from the N-terminus, the 1217-residue chain is Myosin-5 (1217 aa).

Over residues Met1 to Lys11 the composition is skewed to basic residues. The segment at Met1 to Ile24 is disordered. The region spanning Val37–Asp716 is the Myosin motor domain. Gly130–Thr137 is a binding site for ATP. At Ser358 the chain carries Phosphoserine. An actin-binding region spans residues Ser405–Ser487. 2 IQ domains span residues His720 to Ala740 and Ala741 to Ser766. The 191-residue stretch at Lys772 to Ala962 folds into the TH1 domain. Disordered stretches follow at residues Val956–Glu1102, Gly1145–Val1174, and Asn1197–Trp1217. Positions Lys965–Ser974 are enriched in basic residues. Polar residues predominate over residues Gly976 to Thr987. Low complexity predominate over residues Ser994 to Asn1007. Residues Pro1025–Gln1038 are compositionally biased toward pro residues. Over residues Pro1050–Ser1071 the composition is skewed to low complexity. A compositionally biased stretch (pro residues) spans Ile1072–Ser1081. Residues Thr1083 to Gly1145 enclose the SH3 domain. Residues Ile1162–Val1174 show a composition bias toward polar residues. Over residues Ser1203–Trp1217 the composition is skewed to acidic residues.

This sequence belongs to the TRAFAC class myosin-kinesin ATPase superfamily. Myosin family. Phosphorylation of the TEDS site (Ser-358) is required for the polarization of the actin cytoskeleton. Phosphorylation probably activates the myosin-I ATPase activity.

It is found in the cytoplasm. The protein resides in the cytoskeleton. It localises to the actin patch. Type-I myosin implicated in the organization of the actin cytoskeleton. Required for proper actin cytoskeleton polarization. At the cell cortex, assembles in patch-like structures together with proteins from the actin-polymerizing machinery and promotes actin assembly. Functions as actin nucleation-promoting factor (NPF) for the Arp2/3 complex. The polypeptide is Myosin-5 (MYO5) (Candida glabrata (strain ATCC 2001 / BCRC 20586 / JCM 3761 / NBRC 0622 / NRRL Y-65 / CBS 138) (Yeast)).